Consider the following 154-residue polypeptide: Endoribonuclease YbeY (154 aa).

The Zn(2+) site is built by His-113, His-117, and His-123.

It belongs to the endoribonuclease YbeY family. Zn(2+) is required as a cofactor.

The protein localises to the cytoplasm. Functionally, single strand-specific metallo-endoribonuclease involved in late-stage 70S ribosome quality control and in maturation of the 3' terminus of the 16S rRNA. The sequence is that of Endoribonuclease YbeY from Ehrlichia canis (strain Jake).